The chain runs to 1427 residues: A disintegrin and metalloproteinase with thrombospondin motifs 13 (1427 aa).

Positions 1–29 (MHQRHPRARCPPLCVAGILACGFLLGCWG) are cleaved as a signal peptide. The propeptide occupies 30 to 74 (PSHFQQSCLQALEPQAVSSYLSPGAPLKGRPPSPGFQRQRQRQRR). Positions 51–70 (SPGAPLKGRPPSPGFQRQRQ) are disordered. In terms of domain architecture, Peptidase M12B spans 80–286 (LHLELLVAVG…GRARCVWDPP (207 aa)). Glu-83 is a Ca(2+) binding site. Residues Asn-142 and Asn-146 are each glycosylated (N-linked (GlcNAc...) asparagine). 3 cysteine pairs are disulfide-bonded: Cys-155/Cys-208, Cys-202/Cys-281, and Cys-242/Cys-265. Ca(2+) is bound by residues Asp-173, Asp-182, Glu-184, Asp-187, and Glu-212. His-224 provides a ligand contact to Zn(2+). Glu-225 is an active-site residue. Zn(2+) is bound by residues His-228 and His-234. Ca(2+) is bound by residues Cys-281 and Asp-284. Residues 287–383 (RPQPGSAGHP…LVELTPIAAV (97 aa)) enclose the Disintegrin domain. 4 disulfides stabilise this stretch: Cys-311-Cys-337, Cys-322-Cys-347, Cys-332-Cys-366, and Cys-360-Cys-371. Residues 384 to 439 (HGRWSSWGPRSPCSRSCGGGVVTRRRQCNNPRPAFGGRACVGADLQAEMCNTQACE) form the TSP type-1 1 domain. The C-linked (Man) tryptophan glycan is linked to Trp-387. 8 disulfide bridges follow: Cys-396-Cys-433, Cys-400-Cys-438, Cys-411-Cys-423, Cys-450-Cys-487, Cys-483-Cys-522, Cys-508-Cys-527, Cys-532-Cys-548, and Cys-545-Cys-555. Ser-399 carries an O-linked (Fuc...) serine glycan. A cysteine-rich region spans residues 440–556 (KTQLEFMSQQ…VCGGDNSTCS (117 aa)). Positions 498 to 500 (RGD) match the Cell attachment site motif. 3 N-linked (GlcNAc...) asparagine glycosylation sites follow: Asn-552, Asn-579, and Asn-614. Residues 556 to 685 (SPRKGSFTAG…TYFQPKPRQA (130 aa)) are spacer. Asn-667 carries an N-linked (GlcNAc...) (complex) asparagine glycan. 7 consecutive TSP type-1 domains span residues 682–730 (PRQA…SQQP), 742–805 (CPPY…QPCP), 808–859 (WEVS…PEPC), 896–950 (VWTP…QAVP), 951–1011 (CPAR…SLEP), 1012–1068 (CPPR…VPCL), and 1072–1131 (CTYR…GPCV). O-linked (Fuc...) serine glycosylation occurs at Ser-698. Asn-707 is a glycosylation site (N-linked (GlcNAc...) (complex) asparagine). Ser-757 carries O-linked (Fuc...) serine glycosylation. Asn-828 is a glycosylation site (N-linked (GlcNAc...) asparagine). 4 O-linked (Fuc...) serine glycosylation sites follow: Ser-907, Ser-965, Ser-1027, and Ser-1087. CUB domains follow at residues 1192-1298 (CGRQ…FYRE) and 1299-1427 (CDMQ…KEGT). Residues Asn-1235 and Asn-1354 are each glycosylated (N-linked (GlcNAc...) asparagine).

Zn(2+) serves as cofactor. Requires Ca(2+) as cofactor. In terms of processing, glycosylated. O-fucosylated by POFUT2 on a serine or a threonine residue found within the consensus sequence C1-X(2)-(S/T)-C2-G of the TSP type-1 repeat domains where C1 and C2 are the first and second cysteine residue of the repeat, respectively. Fucosylated repeats can then be further glycosylated by the addition of a beta-1,3-glucose residue by the glucosyltransferase, B3GALTL. Fucosylation mediates the efficient secretion of ADAMTS13. May also be C-glycosylated on tryptophan residues within the consensus sequence W-X-X-W of the TPRs, and also N-glycosylated. These other glycosylations can also facilitate secretion. The precursor is processed by a furin endopeptidase which cleaves off the pro-domain. In terms of tissue distribution, plasma. Expressed primarily in liver.

It is found in the secreted. The enzyme catalyses The enzyme cleaves the von Willebrand factor at bond 842-Tyr-|-Met-843 within the A2 domain.. With respect to regulation, zinc and calcium ions cooperatively modulate enzyme activity. The cleavage of the pro-domain is not required for protease activity. Dependence on calcium for proteolytic activity is mediated by the high affinity site. In terms of biological role, cleaves the vWF multimers in plasma into smaller forms thereby controlling vWF-mediated platelet thrombus formation. The polypeptide is A disintegrin and metalloproteinase with thrombospondin motifs 13 (ADAMTS13) (Homo sapiens (Human)).